The following is a 542-amino-acid chain: Chaperonin GroEL (542 aa).

ATP-binding positions include 29-32, 86-90, Gly413, 477-479, and Asp493; these read TLGP, DGTTT, and NAA.

The protein belongs to the chaperonin (HSP60) family. As to quaternary structure, forms a cylinder of 14 subunits composed of two heptameric rings stacked back-to-back. Interacts with the co-chaperonin GroES.

It is found in the cytoplasm. The enzyme catalyses ATP + H2O + a folded polypeptide = ADP + phosphate + an unfolded polypeptide.. Functionally, together with its co-chaperonin GroES, plays an essential role in assisting protein folding. The GroEL-GroES system forms a nano-cage that allows encapsulation of the non-native substrate proteins and provides a physical environment optimized to promote and accelerate protein folding. The chain is Chaperonin GroEL from Beutenbergia cavernae (strain ATCC BAA-8 / DSM 12333 / CCUG 43141 / JCM 11478 / NBRC 16432 / NCIMB 13614 / HKI 0122).